The chain runs to 116 residues: Putative BPES syndrome breakpoint region protein (116 aa).

As to expression, seems to be expressed only in testis.

The chain is Putative BPES syndrome breakpoint region protein (BPESC1) from Homo sapiens (Human).